The following is a 505-amino-acid chain: L-carnitine/gamma-butyrobetaine antiporter (505 aa).

The next 12 membrane-spanning stretches (helical) occupy residues 10 to 30 (IEPK…WLTV), 51 to 71 (WGWA…WLVF), 92 to 112 (IFMM…SIEI), 143 to 163 (GPLP…FFFV), 195 to 215 (FYLV…TPLV), 231 to 251 (LDAI…ACGL), 263 to 283 (SYLS…SFIM), 316 to 336 (WTVF…IFLA), 347 to 367 (LCFG…TVLG), 403 to 423 (LSTA…VTLI), 446 to 466 (LLVR…LLAL), and 475 to 495 (AIIA…LSFI).

The protein belongs to the BCCT transporter (TC 2.A.15) family. CaiT subfamily. Homotrimer.

The protein resides in the cell inner membrane. The catalysed reaction is 4-(trimethylamino)butanoate(in) + (R)-carnitine(out) = 4-(trimethylamino)butanoate(out) + (R)-carnitine(in). Its pathway is amine and polyamine metabolism; carnitine metabolism. Its function is as follows. Catalyzes the exchange of L-carnitine for gamma-butyrobetaine. This Salmonella choleraesuis (strain SC-B67) protein is L-carnitine/gamma-butyrobetaine antiporter.